A 1486-amino-acid polypeptide reads, in one-letter code: Chromosome partition protein MukB (1486 aa).

34 to 41 (GGNGAGKS) provides a ligand contact to ATP. Coiled coils occupy residues 326–418 (LEAD…QYNQ), 444–480 (LETF…QAYQ), and 509–603 (RHLA…RAPV). The interval 666–783 (PGGSEDQRLN…EVPLFGRAAR (118 aa)) is flexible hinge. Coiled-coil stretches lie at residues 835-923 (EAEI…AKLE), 977-1115 (EMLS…TAKA), and 1209-1266 (VEAI…QNVS).

It belongs to the SMC family. MukB subfamily. Homodimerization via its hinge domain. Binds to DNA via its C-terminal region. Interacts, and probably forms a ternary complex, with MukE and MukF via its C-terminal region. The complex formation is stimulated by calcium or magnesium. Interacts with tubulin-related protein FtsZ.

It localises to the cytoplasm. Its subcellular location is the nucleoid. Its function is as follows. Plays a central role in chromosome condensation, segregation and cell cycle progression. Functions as a homodimer, which is essential for chromosome partition. Involved in negative DNA supercoiling in vivo, and by this means organize and compact chromosomes. May achieve or facilitate chromosome segregation by condensation DNA from both sides of a centrally located replisome during cell division. This chain is Chromosome partition protein MukB, found in Escherichia coli O1:K1 / APEC.